The chain runs to 492 residues: Catalase isozyme 2 (492 aa).

Active-site residues include H65 and N138. Residue Y348 coordinates heme.

The protein belongs to the catalase family. As to quaternary structure, homotetramer. It depends on heme as a cofactor.

Its subcellular location is the peroxisome. The catalysed reaction is 2 H2O2 = O2 + 2 H2O. Occurs in almost all aerobically respiring organisms and serves to protect cells from the toxic effects of hydrogen peroxide. The chain is Catalase isozyme 2 (CAT2) from Solanum lycopersicum (Tomato).